Consider the following 205-residue polypeptide: Glycerol-3-phosphate acyltransferase (205 aa).

5 helical membrane-spanning segments follow: residues 4–24, 56–76, 81–101, 112–132, and 138–158; these read IAPG…AILV, VAVL…AYAL, FWLG…VFFG, FGAI…TWLL, and GYSS…VWWF.

This sequence belongs to the PlsY family. Probably interacts with PlsX.

It localises to the cell inner membrane. The enzyme catalyses an acyl phosphate + sn-glycerol 3-phosphate = a 1-acyl-sn-glycero-3-phosphate + phosphate. It participates in lipid metabolism; phospholipid metabolism. Its function is as follows. Catalyzes the transfer of an acyl group from acyl-phosphate (acyl-PO(4)) to glycerol-3-phosphate (G3P) to form lysophosphatidic acid (LPA). This enzyme utilizes acyl-phosphate as fatty acyl donor, but not acyl-CoA or acyl-ACP. The polypeptide is Glycerol-3-phosphate acyltransferase (Citrobacter koseri (strain ATCC BAA-895 / CDC 4225-83 / SGSC4696)).